The primary structure comprises 292 residues: UTP--glucose-1-phosphate uridylyltransferase (292 aa).

This sequence belongs to the UDPGP type 2 family.

The enzyme catalyses alpha-D-glucose 1-phosphate + UTP + H(+) = UDP-alpha-D-glucose + diphosphate. Its function is as follows. May play a role in stationary phase survival. The sequence is that of UTP--glucose-1-phosphate uridylyltransferase (galU) from Mycoplasma genitalium (strain ATCC 33530 / DSM 19775 / NCTC 10195 / G37) (Mycoplasmoides genitalium).